The sequence spans 131 residues: Small ribosomal subunit protein uS8 (131 aa).

It belongs to the universal ribosomal protein uS8 family. In terms of assembly, part of the 30S ribosomal subunit. Contacts proteins S5 and S12.

Functionally, one of the primary rRNA binding proteins, it binds directly to 16S rRNA central domain where it helps coordinate assembly of the platform of the 30S subunit. The polypeptide is Small ribosomal subunit protein uS8 (Campylobacter fetus subsp. fetus (strain 82-40)).